Reading from the N-terminus, the 81-residue chain is Photosystem I iron-sulfur center (81 aa).

4Fe-4S ferredoxin-type domains follow at residues 2–31 (SHSVKIYDTCIGCTHCVRACPTDVLEMIPW) and 39–68 (IASAPRTEDCVGCKRCESACPTDFLSVRVY). [4Fe-4S] cluster contacts are provided by Cys-11, Cys-14, Cys-17, Cys-21, Cys-48, Cys-51, Cys-54, and Cys-58.

The eukaryotic PSI reaction center is composed of at least 11 subunits. The cofactor is [4Fe-4S] cluster.

The protein localises to the plastid. It localises to the chloroplast thylakoid membrane. It carries out the reaction reduced [plastocyanin] + hnu + oxidized [2Fe-2S]-[ferredoxin] = oxidized [plastocyanin] + reduced [2Fe-2S]-[ferredoxin]. Functionally, apoprotein for the two 4Fe-4S centers FA and FB of photosystem I (PSI); essential for photochemical activity. FB is the terminal electron acceptor of PSI, donating electrons to ferredoxin. The C-terminus interacts with PsaA/B/D and helps assemble the protein into the PSI complex. Required for binding of PsaD and PsaE to PSI. PSI is a plastocyanin-ferredoxin oxidoreductase, converting photonic excitation into a charge separation, which transfers an electron from the donor P700 chlorophyll pair to the spectroscopically characterized acceptors A0, A1, FX, FA and FB in turn. This chain is Photosystem I iron-sulfur center, found in Zea mays (Maize).